The primary structure comprises 30 residues: SIPCGESCVWIPCTITALAGCKCKSKVCYN.

Residues 1 to 30 (SIPCGESCVWIPCTITALAGCKCKSKVCYN) constitute a cross-link (cyclopeptide (Ser-Asn)). Disulfide bonds link cysteine 4–cysteine 21, cysteine 8–cysteine 23, and cysteine 13–cysteine 28.

This is a cyclic peptide.

Functionally, probably participates in a plant defense mechanism. In Viola odorata (Sweet violet), this protein is Cycloviolacin-O7.